Reading from the N-terminus, the 1426-residue chain is ABC transporter G family member 31 (1426 aa).

One can recognise an ABC transporter 1 domain in the interval 142–415 (LRHLRIYRGG…FAGMGFRCPE (274 aa)). 175 to 182 (GPPSSGKT) provides a ligand contact to ATP. The ABC transmembrane type-2 1 domain occupies 493-706 (ELLKSNFQWQ…AQNAISVNEF (214 aa)). Transmembrane regions (helical) follow at residues 511–531 (FIYVFKFIQLLLVALITMTVF), 544–564 (GIIYLGALYFAIVMILFNGFT), 592–612 (LPSWLLSIPTSLIESGMWVLV), 630–650 (FLLLFFLHQTSLALFRVMASL), 655–675 (IVANTFGSFALLVVMILGGFI), 681–701 (IPAWWIWGYWISPMMYAQNAI), and 741–761 (IGVGALFGYAIVLNFLFTLFL). Positions 824–1076 (MCFKNINYYV…NLVEFFEAIP (253 aa)) constitute an ABC transporter 2 domain. 869 to 876 (GVSGAGKT) is an ATP binding site. Residues 1149–1363 (AQYAACLWKQ…TLYGLLTSQF (215 aa)) enclose the ABC transmembrane type-2 2 domain. The next 7 helical transmembrane spans lie at 1168-1188 (YTAVRFFYTVIISLMFGTICW), 1200-1220 (IFNAMGAMYAAVLFIGITNAT), 1245-1265 (LPFAFSLVTVEFPYILVQSLI), 1283-1303 (FLWYLFFMYFTLLYFTFYGMM), 1313-1333 (VAPIIAAPFYTLWNLFCGFMI), 1341-1363 (WWRWYYWANPVSWTLYGLLTSQF), and 1398-1418 (VVAGMVAGFCVLFAVVFALAI).

This sequence belongs to the ABC transporter superfamily. ABCG family. PDR (TC 3.A.1.205) subfamily.

It is found in the membrane. May be a general defense protein. The chain is ABC transporter G family member 31 from Oryza sativa subsp. japonica (Rice).